The following is a 205-amino-acid chain: Protein N-terminal glutamine amidohydrolase (205 aa).

Active-site residues include Cys-20, His-74, and Asp-90.

This sequence belongs to the NTAQ1 family. As to quaternary structure, monomer.

The enzyme catalyses N-terminal L-glutaminyl-[protein] + H2O = N-terminal L-glutamyl-[protein] + NH4(+). Its function is as follows. Mediates the side-chain deamidation of N-terminal glutamine residues to glutamate, an important step in N-end rule pathway of protein degradation. Conversion of the resulting N-terminal glutamine to glutamate renders the protein susceptible to arginylation, polyubiquitination and degradation as specified by the N-end rule. Does not act on substrates with internal or C-terminal glutamine and does not act on non-glutamine residues in any position. The chain is Protein N-terminal glutamine amidohydrolase (tun) from Drosophila pseudoobscura pseudoobscura (Fruit fly).